We begin with the raw amino-acid sequence, 302 residues long: Nucleotide-binding protein SERP0433 (302 aa).

18 to 25 (GMSGAGKS) contacts ATP. 69–72 (DLRG) serves as a coordination point for GTP.

Belongs to the RapZ-like family.

Displays ATPase and GTPase activities. This chain is Nucleotide-binding protein SERP0433, found in Staphylococcus epidermidis (strain ATCC 35984 / DSM 28319 / BCRC 17069 / CCUG 31568 / BM 3577 / RP62A).